The chain runs to 231 residues: MSMLSLLRSQLFNFMPIIHCLLKLNSTRKFKSFQLKAGFWESIKSGLMKNNSMQVIDPPSTDEENVEPLSQDFVLVEKTEPDGTIEQIIFSSGGDVDVYDLQALCDKVGWPRRPLSKLAAALKNSYIVASLHSIRKSHGSEGNEQKRLIGMARATSDHAFNATIWDVLVDPGYQGQGLGKALIEKLIRTLLQRDIGNITLFADSQVVEFYRNLGFEADPEGIKGMFWYPNH.

Positions 88 to 231 (IIFSSGGDVD…IKGMFWYPNH (144 aa)) constitute an N-acetyltransferase domain.

Belongs to the acetyltransferase family. Interacts with the effector Avh52 from the pathogen Phytophtora sojae.

The protein localises to the cytoplasm. Its subcellular location is the nucleus. It catalyses the reaction L-lysyl-[histone] + acetyl-CoA = N(6)-acetyl-L-lysyl-[histone] + CoA + H(+). Acetylates histones H2A and H3 in vitro. Functionally, (Microbial infection) Acts as a negative regulator of immunity when hijacked and relocated to the nucleus by the effector Avh52 from the pathogen Phytophtora sojae. Acts as a susceptibility factor that is hijacked by Avh52 in order to promote acetylation of histones H2A and H3 during early infection by Phytophtora sojae. These epigenetic modifications may up-regulate the expression of potential plant susceptibility genes, thereby promoting susceptibility to Phytophtora sojae. In Glycine max (Soybean), this protein is Histone acetyltransferase TAP1.